The chain runs to 107 residues: Proteinase inhibitor 1 (107 aa).

The signal sequence occupies residues 1–23; the sequence is MELKFAHIIVFFLLATSFETLMA. Positions 24 to 36 are excised as a propeptide; the sequence is RKESDGPEVIQLL.

Belongs to the protease inhibitor I13 (potato type I serine protease inhibitor) family.

This Solanum tuberosum (Potato) protein is Proteinase inhibitor 1.